The following is a 470-amino-acid chain: ATP synthase subunit beta (470 aa).

Residue 157–164 participates in ATP binding; the sequence is GGAGVGKT.

It belongs to the ATPase alpha/beta chains family. F-type ATPases have 2 components, CF(1) - the catalytic core - and CF(0) - the membrane proton channel. CF(1) has five subunits: alpha(3), beta(3), gamma(1), delta(1), epsilon(1). CF(0) has three main subunits: a(1), b(2) and c(9-12). The alpha and beta chains form an alternating ring which encloses part of the gamma chain. CF(1) is attached to CF(0) by a central stalk formed by the gamma and epsilon chains, while a peripheral stalk is formed by the delta and b chains.

Its subcellular location is the cell inner membrane. It catalyses the reaction ATP + H2O + 4 H(+)(in) = ADP + phosphate + 5 H(+)(out). Produces ATP from ADP in the presence of a proton gradient across the membrane. The catalytic sites are hosted primarily by the beta subunits. This Geotalea daltonii (strain DSM 22248 / JCM 15807 / FRC-32) (Geobacter daltonii) protein is ATP synthase subunit beta.